A 375-amino-acid chain; its full sequence is Succinyl-diaminopimelate desuccinylase (375 aa).

His66 is a binding site for Zn(2+). Asp68 is an active-site residue. Position 99 (Asp99) interacts with Zn(2+). Glu133 (proton acceptor) is an active-site residue. Zn(2+)-binding residues include Glu134, Glu162, and His348.

Belongs to the peptidase M20A family. DapE subfamily. As to quaternary structure, homodimer. Requires Zn(2+) as cofactor. Co(2+) is required as a cofactor.

It catalyses the reaction N-succinyl-(2S,6S)-2,6-diaminopimelate + H2O = (2S,6S)-2,6-diaminopimelate + succinate. The protein operates within amino-acid biosynthesis; L-lysine biosynthesis via DAP pathway; LL-2,6-diaminopimelate from (S)-tetrahydrodipicolinate (succinylase route): step 3/3. Functionally, catalyzes the hydrolysis of N-succinyl-L,L-diaminopimelic acid (SDAP), forming succinate and LL-2,6-diaminopimelate (DAP), an intermediate involved in the bacterial biosynthesis of lysine and meso-diaminopimelic acid, an essential component of bacterial cell walls. The chain is Succinyl-diaminopimelate desuccinylase from Cronobacter sakazakii (strain ATCC BAA-894) (Enterobacter sakazakii).